The primary structure comprises 250 residues: Ubiquinone/menaquinone biosynthesis C-methyltransferase UbiE (250 aa).

S-adenosyl-L-methionine-binding positions include Ser73, Asp94, and 122–123 (NA).

The protein belongs to the class I-like SAM-binding methyltransferase superfamily. MenG/UbiE family.

It carries out the reaction a 2-demethylmenaquinol + S-adenosyl-L-methionine = a menaquinol + S-adenosyl-L-homocysteine + H(+). The enzyme catalyses a 2-methoxy-6-(all-trans-polyprenyl)benzene-1,4-diol + S-adenosyl-L-methionine = a 5-methoxy-2-methyl-3-(all-trans-polyprenyl)benzene-1,4-diol + S-adenosyl-L-homocysteine + H(+). It participates in quinol/quinone metabolism; menaquinone biosynthesis; menaquinol from 1,4-dihydroxy-2-naphthoate: step 2/2. It functions in the pathway cofactor biosynthesis; ubiquinone biosynthesis. Its function is as follows. Methyltransferase required for the conversion of demethylmenaquinol (DMKH2) to menaquinol (MKH2) and the conversion of 2-polyprenyl-6-methoxy-1,4-benzoquinol (DDMQH2) to 2-polyprenyl-3-methyl-6-methoxy-1,4-benzoquinol (DMQH2). This is Ubiquinone/menaquinone biosynthesis C-methyltransferase UbiE from Legionella pneumophila subsp. pneumophila (strain Philadelphia 1 / ATCC 33152 / DSM 7513).